Consider the following 364-residue polypeptide: Dihydroorotate dehydrogenase (quinone) (364 aa).

FMN-binding positions include Ala61–Lys65 and Thr85. Residue Lys65 coordinates substrate. Asn110–Phe114 is a binding site for substrate. FMN contacts are provided by Asn139 and Asn170. A substrate-binding site is contributed by Asn170. Ser173 (nucleophile) is an active-site residue. Residue Asn175 participates in substrate binding. Positions 215 and 243 each coordinate FMN. Asn244–Thr245 serves as a coordination point for substrate. FMN-binding positions include Gly266, Gly295, and Tyr316–Thr317.

This sequence belongs to the dihydroorotate dehydrogenase family. Type 2 subfamily. Monomer. FMN is required as a cofactor.

Its subcellular location is the cell membrane. It carries out the reaction (S)-dihydroorotate + a quinone = orotate + a quinol. It functions in the pathway pyrimidine metabolism; UMP biosynthesis via de novo pathway; orotate from (S)-dihydroorotate (quinone route): step 1/1. Functionally, catalyzes the conversion of dihydroorotate to orotate with quinone as electron acceptor. The protein is Dihydroorotate dehydrogenase (quinone) of Brucella abortus (strain S19).